The sequence spans 284 residues: MSKIETSGPVVQVGDARFANHLPLTLIAGPCQLEGRQHALEIAAALKEMAAGLGVGLVFKTSFDKANRTSGSAARGIGLDGALPVFAEIRETLGLPVLTDVHAAEQCARAAEAVDVLQIPAFLCRQTDLLLAAAATGRAVNIKKGQFLAPWDMKHVAAKVTEAGNPNVIVTERGASFGYNTLVSDMRSLPIMAQVTQGAPVVFDATHSVQQPGGQGASSGGQREFVAVLARAAVAVGVAGVFIETHPDPDRAPSDGPNMVALRDMPALLEELLAFDRLAKRRTA.

The protein belongs to the KdsA family.

Its subcellular location is the cytoplasm. The catalysed reaction is D-arabinose 5-phosphate + phosphoenolpyruvate + H2O = 3-deoxy-alpha-D-manno-2-octulosonate-8-phosphate + phosphate. The protein operates within carbohydrate biosynthesis; 3-deoxy-D-manno-octulosonate biosynthesis; 3-deoxy-D-manno-octulosonate from D-ribulose 5-phosphate: step 2/3. Its pathway is bacterial outer membrane biogenesis; lipopolysaccharide biosynthesis. This Methylobacterium radiotolerans (strain ATCC 27329 / DSM 1819 / JCM 2831 / NBRC 15690 / NCIMB 10815 / 0-1) protein is 2-dehydro-3-deoxyphosphooctonate aldolase.